The chain runs to 180 residues: Dual-action ribosomal maturation protein DarP (180 aa).

This sequence belongs to the DarP family.

The protein resides in the cytoplasm. In terms of biological role, member of a network of 50S ribosomal subunit biogenesis factors which assembles along the 30S-50S interface, preventing incorrect 23S rRNA structures from forming. Promotes peptidyl transferase center (PTC) maturation. The chain is Dual-action ribosomal maturation protein DarP from Pasteurella multocida (strain Pm70).